A 683-amino-acid chain; its full sequence is UvrABC system protein B (683 aa).

Residues Ala-31–Glu-414 enclose the Helicase ATP-binding domain. Gly-44 to Thr-51 is a binding site for ATP. Residues Tyr-97–Ile-120 carry the Beta-hairpin motif. The 167-residue stretch at Gln-435–Ile-601 folds into the Helicase C-terminal domain. The region spanning Lys-632–Ser-667 is the UVR domain. The tract at residues Met-662–Arg-683 is disordered. The span at Arg-669 to Arg-683 shows a compositional bias: basic residues.

The protein belongs to the UvrB family. In terms of assembly, forms a heterotetramer with UvrA during the search for lesions. Interacts with UvrC in an incision complex.

The protein localises to the cytoplasm. In terms of biological role, the UvrABC repair system catalyzes the recognition and processing of DNA lesions. A damage recognition complex composed of 2 UvrA and 2 UvrB subunits scans DNA for abnormalities. Upon binding of the UvrA(2)B(2) complex to a putative damaged site, the DNA wraps around one UvrB monomer. DNA wrap is dependent on ATP binding by UvrB and probably causes local melting of the DNA helix, facilitating insertion of UvrB beta-hairpin between the DNA strands. Then UvrB probes one DNA strand for the presence of a lesion. If a lesion is found the UvrA subunits dissociate and the UvrB-DNA preincision complex is formed. This complex is subsequently bound by UvrC and the second UvrB is released. If no lesion is found, the DNA wraps around the other UvrB subunit that will check the other stand for damage. The sequence is that of UvrABC system protein B from Lactobacillus acidophilus (strain ATCC 700396 / NCK56 / N2 / NCFM).